The sequence spans 103 residues: Putative glutaredoxin-C14 (103 aa).

One can recognise a Glutaredoxin domain in the interval 1–102; sequence MDRVMKLASE…PMLKNAGALW (102 aa). A disulfide bridge links Cys21 with Cys24. Residues 100 to 103 carry the Responsive for interaction with TGA factors motif; the sequence is ALWL.

Belongs to the glutaredoxin family. CC-type subfamily.

The protein localises to the cytoplasm. It is found in the nucleus. Has a glutathione-disulfide oxidoreductase activity in the presence of NADPH and glutathione reductase. Reduces low molecular weight disulfides and proteins. The sequence is that of Putative glutaredoxin-C14 (GRXC14) from Oryza sativa subsp. japonica (Rice).